We begin with the raw amino-acid sequence, 363 residues long: Flagellar P-ring protein 2 (363 aa).

A signal peptide spans 1–18 (MLIRLLLLVICLAGPGVA).

It belongs to the FlgI family. As to quaternary structure, the basal body constitutes a major portion of the flagellar organelle and consists of four rings (L,P,S, and M) mounted on a central rod.

It is found in the periplasm. It localises to the bacterial flagellum basal body. In terms of biological role, assembles around the rod to form the L-ring and probably protects the motor/basal body from shearing forces during rotation. The chain is Flagellar P-ring protein 2 from Cereibacter sphaeroides (strain ATCC 17023 / DSM 158 / JCM 6121 / CCUG 31486 / LMG 2827 / NBRC 12203 / NCIMB 8253 / ATH 2.4.1.) (Rhodobacter sphaeroides).